The chain runs to 780 residues: MAPYCSSLRSALLVLALCALSPSHAATASRGRAQERAPQSRVSETRPSTMVVEHPEFLKAGKEPGLQIWRVEKFDLVPVPPNLYGDFFTGDAYVILKTVQLRNGNLQYDLHYWLGNECSQDESGAAAIFTVQLDDYLNGRAVQHREVQGFESSTFQGYFKSGLKYKKGGVASGFKHVVPNEVVVQRLFQVKGRRVVRATEVPVSWDSFNNGDCFILDLGNNIYQWCGSGSNKFERLKATQVSKGIRDNERSGRAQVHVSEEGSEPEAMLQVLGPKPDLPQGTEDTAKEDAANRRLAKLYKVSNSGGSMSVSLVADENPFAQSALRSEDCFILDHGRDGKIFVWKGKQANMDERKAALKTASDFISKMQYPRQTQVSVLPEGGETPLFKQFFKNWRDPDQTDGPGLSYLSSHIANVERVPFDAATLHTSTAMAAQHGMDDDGTGQKQIWRIEGSNKVLVDPATYGQFYGGDSYIILYNYRHGGRQGQIIYNWQGAQSTQDEVAASAILTAQLDEELGGTPVQSRVVQGKEPAHLMSLFGGKPMIIYKGGTSRDGGQTTPASTRLFQVRASSSGATRAVEVMPKAGALNSNDAFVLKTPSAAYLWVGTGASDAEKTGALELLKVLRAQHVQVEEGSEPDGFWEALGGKTAYRTSPRLKDKKMDAHPPRLFACSNRIGRFVIEEVPGELMQEDLATDDVMLLDTWDQVFVWVGKDSQEEEKTEALTSAKRYIETDPANRDRRTPITVVRQGFEPPSFVGWFLGWDDDYWSVDPLDRALAELAA.

The first 25 residues, 1-25 (MAPYCSSLRSALLVLALCALSPSHA), serve as a signal peptide directing secretion. The segment at 28–48 (ASRGRAQERAPQSRVSETRPS) is disordered. Residues 51 to 174 (VVEHPEFLKA…YKKGGVASGF (124 aa)) form an actin-severing region. The Gelsolin-like 1 repeat unit spans residues 74 to 155 (FDLVPVPPNL…EVQGFESSTF (82 aa)). Tyr-84 is subject to Phosphotyrosine. 6 residues coordinate Ca(2+): Gly-90, Asp-91, Glu-122, Asp-134, Gly-139, and Ala-141. The interval 121–124 (DESG) is actin-actin interfilament contact point. A 1,2-diacyl-sn-glycero-3-phospho-(1D-myo-inositol-4,5-bisphosphate) is bound at residue 160–167 (KSGLKYKK). A Ca(2+)-binding site is contributed by Val-170. 186-194 (RLFQVKGRR) lines the a 1,2-diacyl-sn-glycero-3-phospho-(1D-myo-inositol-4,5-bisphosphate) pocket. The Gelsolin-like 2 repeat unit spans residues 196–268 (VRATEVPVSW…SEEGSEPEAM (73 aa)). Ca(2+) contacts are provided by Gly-211 and Asp-212. The cysteines at positions 213 and 226 are disulfide-linked. Ca(2+) is bound by residues Glu-234, Asp-284, Glu-327, Asp-328, and Glu-352. Positions 244–286 (GIRDNERSGRAQVHVSEEGSEPEAMLQVLGPKPDLPQGTEDTA) are disordered. A Gelsolin-like 3 repeat occupies 315–387 (DENPFAQSAL…LPEGGETPLF (73 aa)). Phosphotyrosine occurs at positions 407 and 463. Residues 432–780 (AAQHGMDDDG…LDRALAELAA (349 aa)) form an actin-binding, Ca-sensitive region. The stretch at 453-534 (SNKVLVDPAT…VQGKEPAHLM (82 aa)) is one Gelsolin-like 4 repeat. Ca(2+)-binding residues include Gly-469, Asp-470, Glu-500, Asp-512, Gly-517, Pro-519, and Thr-549. The stretch at 576-640 (AVEVMPKAGA…EEGSEPDGFW (65 aa)) is one Gelsolin-like 5 repeat. At Lys-582 the chain carries N6-acetyllysine. The Ca(2+) site is built by Asn-589 and Asp-590. A Phosphotyrosine modification is found at Tyr-601. Glu-612 contacts Ca(2+). Tyr-649 carries the phosphotyrosine modification. Residues 679-754 (IEEVPGELMQ…VRQGFEPPSF (76 aa)) form a Gelsolin-like 6 repeat. The Ca(2+) site is built by Asp-694, Asp-695, and Glu-717. Thr-740 is subject to Phosphothreonine.

It belongs to the villin/gelsolin family. As to quaternary structure, binds to actin and to fibronectin. Identified in a complex composed of ACTA1, COBL, GSN and TMSB4X. Interacts with the inactive form of EIF2AK2/PKR. Interacts with FLII. In terms of processing, phosphorylated on tyrosine residues in vitro.

Its subcellular location is the secreted. The protein localises to the cytoplasm. It is found in the cytoskeleton. Functionally, calcium-regulated, actin-modulating protein that binds to the plus (or barbed) ends of actin monomers or filaments, preventing monomer exchange (end-blocking or capping). It can promote the assembly of monomers into filaments (nucleation) as well as sever filaments already formed. Plays a role in ciliogenesis. This Rattus norvegicus (Rat) protein is Gelsolin (Gsn).